The chain runs to 253 residues: Ribosomal RNA small subunit methyltransferase J (253 aa).

Residues 101-102 (RD), 117-118 (ER), and aspartate 169 each bind S-adenosyl-L-methionine.

The protein belongs to the methyltransferase superfamily. RsmJ family.

The protein resides in the cytoplasm. The enzyme catalyses guanosine(1516) in 16S rRNA + S-adenosyl-L-methionine = N(2)-methylguanosine(1516) in 16S rRNA + S-adenosyl-L-homocysteine + H(+). Functionally, specifically methylates the guanosine in position 1516 of 16S rRNA. In Psychromonas ingrahamii (strain DSM 17664 / CCUG 51855 / 37), this protein is Ribosomal RNA small subunit methyltransferase J.